The chain runs to 257 residues: Global transcriptional regulator CodY (257 aa).

A GAF domain region spans residues 1–155 (MSLLSKTREL…AATVIGMEIL (155 aa)). Val-22, Phe-24, Ser-43, Arg-44, Arg-45, and Lys-47 together coordinate GTP. Residues Arg-61, Thr-96, and Phe-98 each contribute to the L-isoleucine site. Residues Glu-153 and Lys-158 each contribute to the GTP site. A DNA-binding region (H-T-H motif) is located at residues 203–222 (ASKVADRVGITRSVIVNALR).

This sequence belongs to the CodY family. As to quaternary structure, homodimer. Homotetramer. May form homodimers under conditions in which energy sources are sufficient (active state) and homotetramers under insufficient nutrient conditions (inactive state).

The protein resides in the cytoplasm. Activity of CodY is modulated by interaction with two types of effectors: the branched-chain amino acids (BCAAs) leucine, isoleucine and valine, which are signals of the nutritional status of the cell, and GTP, which may signal the energetic status of the cell. DNA-binding global transcriptional regulator which is involved in the adaptive response to starvation and acts by directly or indirectly controlling the expression of numerous genes in response to nutrient availability. During rapid exponential growth, CodY is highly active and represses genes whose products allow adaptation to nutrient depletion. The polypeptide is Global transcriptional regulator CodY (Staphylococcus aureus (strain Mu3 / ATCC 700698)).